The primary structure comprises 73 residues: uncharacterized protein (73 aa).

This is an uncharacterized protein from Vaccinia virus (strain Copenhagen) (VACV).